The following is a 252-amino-acid chain: Probable truncated L-gulonolactone oxidase 7, mitochondrial (252 aa).

The N-terminal 102 residues, 1–102 (MKRSMRSHLA…ELNYGVLVRY (102 aa)), are a transit peptide targeting the mitochondrion.

This sequence belongs to the oxygen-dependent FAD-linked oxidoreductase family.

It is found in the mitochondrion. It carries out the reaction L-gulono-1,4-lactone + O2 = L-ascorbate + H2O2 + H(+). The protein operates within cofactor biosynthesis; L-ascorbate biosynthesis. In terms of biological role, may be involved in the biosynthesis of ascorbic acid. In Arabidopsis thaliana (Mouse-ear cress), this protein is Probable truncated L-gulonolactone oxidase 7, mitochondrial.